Here is a 601-residue protein sequence, read N- to C-terminus: Elongation factor 4 (601 aa).

The tr-type G domain maps to 7-189 (SLIRNFSIIA…ALVTRLPPPV (183 aa)). Residues 19–24 (DHGKST) and 136–139 (NKVD) each bind GTP.

Belongs to the TRAFAC class translation factor GTPase superfamily. Classic translation factor GTPase family. LepA subfamily.

Its subcellular location is the cell inner membrane. The catalysed reaction is GTP + H2O = GDP + phosphate + H(+). In terms of biological role, required for accurate and efficient protein synthesis under certain stress conditions. May act as a fidelity factor of the translation reaction, by catalyzing a one-codon backward translocation of tRNAs on improperly translocated ribosomes. Back-translocation proceeds from a post-translocation (POST) complex to a pre-translocation (PRE) complex, thus giving elongation factor G a second chance to translocate the tRNAs correctly. Binds to ribosomes in a GTP-dependent manner. In Gluconacetobacter diazotrophicus (strain ATCC 49037 / DSM 5601 / CCUG 37298 / CIP 103539 / LMG 7603 / PAl5), this protein is Elongation factor 4.